The primary structure comprises 251 residues: uncharacterized protein (251 aa).

One can recognise an HTH deoR-type domain in the interval 3 to 58 (TPERHQLIIDQIEKHDVVKIQELINLTNASESTIRRDLSTLEERGFLKRVHGGAAK). A DNA-binding region (H-T-H motif) is located at residues 20–39 (VKIQELINLTNASESTIRRD).

This is an uncharacterized protein from Bacillus subtilis (strain 168).